Reading from the N-terminus, the 240-residue chain is Serine protease SplB (240 aa).

Residues 1-36 form the signal peptide; the sequence is MNKNVVIKSLATLTILTSVAGIGTTLVEEVQQTAKA. Catalysis depends on charge relay system residues H75, D113, and S193.

The protein belongs to the peptidase S1B family.

It is found in the secreted. Functionally, serine protease that cleaves specifically after the sequence Trp-Glu-Leu-Gln. The sequence is that of Serine protease SplB (splB) from Staphylococcus aureus (strain bovine RF122 / ET3-1).